The sequence spans 152 residues: Deoxyuridine 5'-triphosphate nucleotidohydrolase (152 aa).

Residues 72 to 74, asparagine 85, and 89 to 91 contribute to the substrate site; these read RSG and TVD.

It belongs to the dUTPase family. Mg(2+) is required as a cofactor.

It catalyses the reaction dUTP + H2O = dUMP + diphosphate + H(+). The protein operates within pyrimidine metabolism; dUMP biosynthesis; dUMP from dCTP (dUTP route): step 2/2. This enzyme is involved in nucleotide metabolism: it produces dUMP, the immediate precursor of thymidine nucleotides and it decreases the intracellular concentration of dUTP so that uracil cannot be incorporated into DNA. The chain is Deoxyuridine 5'-triphosphate nucleotidohydrolase from Nitrobacter hamburgensis (strain DSM 10229 / NCIMB 13809 / X14).